A 294-amino-acid polypeptide reads, in one-letter code: Cytidine deaminase (294 aa).

2 consecutive CMP/dCMP-type deaminase domains span residues 48–168 (DEDA…FGPK) and 186–294 (LTGD…VLLG). Residue 89–91 (NME) coordinates substrate. Residue His102 coordinates Zn(2+). The active-site Proton donor is the Glu104. 2 residues coordinate Zn(2+): Cys129 and Cys132.

This sequence belongs to the cytidine and deoxycytidylate deaminase family. Homodimer. Requires Zn(2+) as cofactor.

It catalyses the reaction cytidine + H2O + H(+) = uridine + NH4(+). It carries out the reaction 2'-deoxycytidine + H2O + H(+) = 2'-deoxyuridine + NH4(+). This enzyme scavenges exogenous and endogenous cytidine and 2'-deoxycytidine for UMP synthesis. This chain is Cytidine deaminase, found in Salmonella agona (strain SL483).